A 532-amino-acid polypeptide reads, in one-letter code: Egg peptide speract receptor (532 aa).

Residues M1–A30 form the signal peptide. At E31 to P491 the chain is on the extracellular side. SRCR domains follow at residues I43–L144, L153–K257, I264–A366, and V382–E485. 12 disulfide bridges follow: C68-C133, C81-C143, C112-C122, C178-C244, C191-C256, C223-C233, C289-C355, C302-C365, C335-C345, C406-C475, C419-C484, and C454-C465. Residues N78 and N115 are each glycosylated (N-linked (GlcNAc...) asparagine). N-linked (GlcNAc...) asparagine glycosylation is present at N459. A helical membrane pass occupies residues S492 to I520. Topologically, residues K521 to A532 are cytoplasmic.

Its subcellular location is the membrane. In terms of biological role, receptor for the egg peptide speract. The sequence is that of Egg peptide speract receptor from Strongylocentrotus purpuratus (Purple sea urchin).